The primary structure comprises 248 residues: Biosynthetic peptidoglycan transglycosylase (248 aa).

The helical transmembrane segment at 20–42 (WLRWLMAAPLLFAAASVLQVLIL) threads the bilayer.

The protein belongs to the glycosyltransferase 51 family.

It localises to the cell inner membrane. It catalyses the reaction [GlcNAc-(1-&gt;4)-Mur2Ac(oyl-L-Ala-gamma-D-Glu-L-Lys-D-Ala-D-Ala)](n)-di-trans,octa-cis-undecaprenyl diphosphate + beta-D-GlcNAc-(1-&gt;4)-Mur2Ac(oyl-L-Ala-gamma-D-Glu-L-Lys-D-Ala-D-Ala)-di-trans,octa-cis-undecaprenyl diphosphate = [GlcNAc-(1-&gt;4)-Mur2Ac(oyl-L-Ala-gamma-D-Glu-L-Lys-D-Ala-D-Ala)](n+1)-di-trans,octa-cis-undecaprenyl diphosphate + di-trans,octa-cis-undecaprenyl diphosphate + H(+). Its pathway is cell wall biogenesis; peptidoglycan biosynthesis. Peptidoglycan polymerase that catalyzes glycan chain elongation from lipid-linked precursors. The polypeptide is Biosynthetic peptidoglycan transglycosylase (Xanthomonas euvesicatoria pv. vesicatoria (strain 85-10) (Xanthomonas campestris pv. vesicatoria)).